The following is a 324-amino-acid chain: MDEVCAAPAPKKMVAKSLVLNTFRKASVKEVVELKKPWKKVLWRKQDYPDNFIDESFLNGLQRNVNIQVTDFWSLVADSLPVSQHLSSVVIFASVFVSIYRNQLSCALVGFVSNVSAVAAFILWDFVLRKPCNNRTFPNYMGIVKSCILIVLTLAGLSPILMSLTKSTSPDSVWAIAVWLFLANVFFHEYTTETIRPHVRLHNSLSTNAALSASVVLASRLEKSINVFFFILFAVHWFALFPIFRKYIHVFSFYADMLMTLVLIISAYIALNAVASVVIAFVFLSLIFFISFICPIWFIKLQRFKNEIHGPWDIALPKLGPSKG.

At methionine 1–serine 79 the chain is on the cytoplasmic side. A helical transmembrane segment spans residues leucine 80–tyrosine 100. Residues arginine 101–alanine 107 lie on the Lumenal side of the membrane. The helical transmembrane segment at leucine 108–leucine 128 threads the bilayer. At arginine 129–tyrosine 140 the chain is on the cytoplasmic side. Residues methionine 141–leucine 161 traverse the membrane as a helical segment. At methionine 162–aspartate 171 the chain is on the lumenal side. Residues serine 172–threonine 192 form a helical membrane-spanning segment. The Cytoplasmic portion of the chain corresponds to glutamate 193 to lysine 223. The chain crosses the membrane as a helical span at residues serine 224–phenylalanine 244. Residues arginine 245 to valine 250 lie on the Lumenal side of the membrane. A helical membrane pass occupies residues phenylalanine 251 to leucine 271. The Cytoplasmic segment spans residues asparagine 272–serine 276. The chain crosses the membrane as a helical span at residues valine 277–isoleucine 299. The Lumenal segment spans residues lysine 300 to glycine 324.

It belongs to the PIGC family.

It is found in the endoplasmic reticulum membrane. It catalyses the reaction a 1,2-diacyl-sn-glycero-3-phospho-(1D-myo-inositol) + UDP-N-acetyl-alpha-D-glucosamine = a 6-(N-acetyl-alpha-D-glucosaminyl)-1-(1,2-diacyl-sn-glycero-3-phospho)-1D-myo-inositol + UDP + H(+). It participates in glycolipid biosynthesis; glycosylphosphatidylinositol-anchor biosynthesis. Part of the complex catalyzing the transfer of N-acetylglucosamine from UDP-N-acetylglucosamine to phosphatidylinositol, the first step of GPI biosynthesis. The sequence is that of Phosphatidylinositol N-acetylglucosaminyltransferase GPI2 subunit (gpi2) from Schizosaccharomyces pombe (strain 972 / ATCC 24843) (Fission yeast).